Here is a 191-residue protein sequence, read N- to C-terminus: dTTP/UTP pyrophosphatase (191 aa).

The Proton acceptor role is filled by Asp-75.

It belongs to the Maf family. YhdE subfamily. A divalent metal cation is required as a cofactor.

It localises to the cytoplasm. It catalyses the reaction dTTP + H2O = dTMP + diphosphate + H(+). It carries out the reaction UTP + H2O = UMP + diphosphate + H(+). Nucleoside triphosphate pyrophosphatase that hydrolyzes dTTP and UTP. May have a dual role in cell division arrest and in preventing the incorporation of modified nucleotides into cellular nucleic acids. In Aliivibrio fischeri (strain ATCC 700601 / ES114) (Vibrio fischeri), this protein is dTTP/UTP pyrophosphatase.